The primary structure comprises 271 residues: Magnesium dechelatase SGR2, chloroplastic (271 aa).

A chloroplast-targeting transit peptide spans 1–54; sequence MCSLATNLLLPSKMKPVFPEKLSTSSLCVTTRRSKMKNRSIVPVARLFGPAIFE.

The protein belongs to the staygreen family. As to quaternary structure, interacts with the light harvesting complex II (LHCII). Interacts with the chlorophyll catabolic enzyme (CCE) RCCR.

The protein localises to the plastid. Its subcellular location is the chloroplast thylakoid membrane. It carries out the reaction chlorophyll a + 2 H(+) = pheophytin a + Mg(2+). Magnesium chelatase involved in chlorophyll a degradation in the chlorophyll-protein complexes of photosystem I (PSI) and photosystem II (PSII). Contributes to the degradation of PSI and PSII in the thylakoid membranes. Required to trigger chlorophyll degradation during natural and dark-induced leaf senescence. Mediates chlorophyll degradation during embryo degreening. Recombinant SGR2 possesses high dechelating activity against chlorophyll a, very low activity against chlorophyllide a, and no activity against chlorophyll b. The protein is Magnesium dechelatase SGR2, chloroplastic of Arabidopsis thaliana (Mouse-ear cress).